The chain runs to 277 residues: MKIAKVINNNVISVVNEQGKELVVMGRGLAFQKKSGDDVDEARIEKVFTLDNKDVSEKFKTLLYDIPIECMEVSEEIISYAKLQLGKKLNDSIYVSLTDHINFAIQRNQKGLDIKNALLWETKRLYKDEFAIGKEALVMVKNKTGVSLPEDEAGFIALHIVNAELNEEMPNIINITKVMQEILSIVKYHFKIEFNEESLHYYRFVTHLKFFAQRLFNGTHMESQDDFLLDTVKEKYHRAYECTKKIQTYIEREYEHKLTSDELLYLTIHIERVVKQA.

PRD domains follow at residues 65–170 and 171–277; these read DIPI…EEMP and NIIN…VKQA.

The protein belongs to the transcriptional antiterminator BglG family. In terms of processing, phosphorylated.

Functionally, mediates positive regulation of the glucanase operon (licST) by functioning as an antiterminator factor of transcription. Prevents termination at terminator lic-t. This chain is Transcription antiterminator LicT (licT), found in Bacillus subtilis (strain 168).